Reading from the N-terminus, the 248-residue chain is MKFLFLILSCLGAAVAFPGGADDDKIVGGYTCPEHSVPYQVSLNSGYHFCGGSLINSQWVLSAAHCYKSRIQVRLGEYNIDVQEDSEVVRSSSVIIRHPKYSSITLNNDIMLIKLASAVEYSADIQPIALPSSCAKAGTECLISGWGNTLSNGYNYPELLQCLNAPILSDQECQEAYPGDITSNMICVGFLEGGKDSCQGDSGGPVVCNGELQGIVSWGIGCALKGYPGVYTKVCNYVDWIQETIAAY.

The signal sequence occupies residues 1–16; it reads MKFLFLILSCLGAAVA. A propeptide spans 17 to 25 (activation peptide); that stretch reads FPGGADDDK. The Peptidase S1 domain maps to 26 to 246; it reads IVGGYTCPEH…YVDWIQETIA (221 aa). 6 cysteine pairs are disulfide-bonded: cysteine 32–cysteine 162, cysteine 50–cysteine 66, cysteine 134–cysteine 235, cysteine 141–cysteine 208, cysteine 173–cysteine 187, and cysteine 198–cysteine 222. Histidine 65 (charge relay system) is an active-site residue. Ca(2+) contacts are provided by glutamate 77, asparagine 79, valine 82, and glutamate 87. Aspartate 109 acts as the Charge relay system in catalysis. The active-site Charge relay system is the serine 202.

It belongs to the peptidase S1 family. The cofactor is Ca(2+). In terms of tissue distribution, high levels are seen in the pancreas while lower levels are found in the liver, spleen and thymus.

Its subcellular location is the secreted. It is found in the extracellular space. It catalyses the reaction Preferential cleavage: Arg-|-Xaa, Lys-|-Xaa.. This chain is Trypsin II-P29, found in Gallus gallus (Chicken).